Consider the following 129-residue polypeptide: Small ribosomal subunit protein uS11 (129 aa).

The protein belongs to the universal ribosomal protein uS11 family. Part of the 30S ribosomal subunit. Interacts with proteins S7 and S18. Binds to IF-3.

In terms of biological role, located on the platform of the 30S subunit, it bridges several disparate RNA helices of the 16S rRNA. Forms part of the Shine-Dalgarno cleft in the 70S ribosome. The chain is Small ribosomal subunit protein uS11 from Xanthobacter autotrophicus (strain ATCC BAA-1158 / Py2).